Reading from the N-terminus, the 183-residue chain is Glutathione-regulated potassium-efflux system ancillary protein KefG (183 aa).

It belongs to the NAD(P)H dehydrogenase (quinone) family. KefG subfamily. In terms of assembly, interacts with KefB.

The protein resides in the cell inner membrane. The enzyme catalyses a quinone + NADH + H(+) = a quinol + NAD(+). It carries out the reaction a quinone + NADPH + H(+) = a quinol + NADP(+). Its function is as follows. Regulatory subunit of a potassium efflux system that confers protection against electrophiles. Required for full activity of KefB. The chain is Glutathione-regulated potassium-efflux system ancillary protein KefG from Salmonella paratyphi C (strain RKS4594).